A 121-amino-acid polypeptide reads, in one-letter code: Basic phospholipase A2 BmTX-I (121 aa).

7 disulfide bridges follow: Cys-26-Cys-114, Cys-28-Cys-45, Cys-44-Cys-95, Cys-50-Cys-121, Cys-51-Cys-88, Cys-58-Cys-82, and Cys-76-Cys-86. Positions 27, 29, and 31 each coordinate Ca(2+). His-48 is an active-site residue. Ca(2+) is bound at residue Asp-49. Asp-89 is a catalytic residue.

Ca(2+) serves as cofactor. As to expression, expressed by the venom gland.

It is found in the secreted. The catalysed reaction is a 1,2-diacyl-sn-glycero-3-phosphocholine + H2O = a 1-acyl-sn-glycero-3-phosphocholine + a fatty acid + H(+). Inhibited by magnesium, cadmium and manganese ions. Also inhibited by crotapotin. In terms of biological role, snake venom phospholipase A2 (PLA2) that shows enzymatic activity in the presence of a synthetic substrate. In vitro, blocks the neuromuscular transmission in young chick biventer cervicis preparations. In mice, induces myonecrosis and a systemic interleukin-6 response upon intramuscular injection. Also induces edema and exerts a strong pro-inflammatory effect. PLA2 catalyzes the calcium-dependent hydrolysis of the 2-acyl groups in 3-sn-phosphoglycerides. The chain is Basic phospholipase A2 BmTX-I from Bothrops moojeni (Lance-headed viper).